A 454-amino-acid chain; its full sequence is tRNA modification GTPase MnmE (454 aa).

(6S)-5-formyl-5,6,7,8-tetrahydrofolate is bound by residues arginine 23, glutamate 80, and lysine 120. One can recognise a TrmE-type G domain in the interval 216–377; the sequence is GMKVVIAGRP…LRNHLKQSMG (162 aa). Asparagine 226 is a K(+) binding site. GTP is bound by residues 226 to 231, 245 to 251, 270 to 273, 335 to 338, and 358 to 360; these read NAGKSS, TDIAGTT, DTAG, NKAD, and SAR. A Mg(2+)-binding site is contributed by serine 230. Threonine 245, isoleucine 247, and threonine 250 together coordinate K(+). Residue threonine 251 participates in Mg(2+) binding. Position 454 (lysine 454) interacts with (6S)-5-formyl-5,6,7,8-tetrahydrofolate.

This sequence belongs to the TRAFAC class TrmE-Era-EngA-EngB-Septin-like GTPase superfamily. TrmE GTPase family. In terms of assembly, homodimer. Heterotetramer of two MnmE and two MnmG subunits. The cofactor is K(+).

It localises to the cytoplasm. In terms of biological role, exhibits a very high intrinsic GTPase hydrolysis rate. Involved in the addition of a carboxymethylaminomethyl (cmnm) group at the wobble position (U34) of certain tRNAs, forming tRNA-cmnm(5)s(2)U34. This chain is tRNA modification GTPase MnmE, found in Escherichia coli O127:H6 (strain E2348/69 / EPEC).